The following is a 374-amino-acid chain: Ribosomal RNA large subunit methyltransferase G (374 aa).

It belongs to the methyltransferase superfamily. RlmG family.

The protein localises to the cytoplasm. It catalyses the reaction guanosine(1835) in 23S rRNA + S-adenosyl-L-methionine = N(2)-methylguanosine(1835) in 23S rRNA + S-adenosyl-L-homocysteine + H(+). Specifically methylates the guanine in position 1835 (m2G1835) of 23S rRNA. This is Ribosomal RNA large subunit methyltransferase G from Pseudomonas fluorescens (strain ATCC BAA-477 / NRRL B-23932 / Pf-5).